A 248-amino-acid chain; its full sequence is UPF0246 protein RAF_ORF0648 (248 aa).

This sequence belongs to the UPF0246 family.

This chain is UPF0246 protein RAF_ORF0648, found in Rickettsia africae (strain ESF-5).